Reading from the N-terminus, the 136-residue chain is UPF0225 protein Pnap_0466 (136 aa).

The protein belongs to the UPF0225 family.

The protein is UPF0225 protein Pnap_0466 of Polaromonas naphthalenivorans (strain CJ2).